Consider the following 184-residue polypeptide: Photosystem I assembly protein Ycf4 (184 aa).

Helical transmembrane passes span 20-42 (VNLC…GFSS) and 57-79 (IAFI…LGLY).

This sequence belongs to the Ycf4 family.

It localises to the plastid. The protein resides in the chloroplast thylakoid membrane. In terms of biological role, seems to be required for the assembly of the photosystem I complex. This is Photosystem I assembly protein Ycf4 from Adiantum capillus-veneris (Maidenhair fern).